A 49-amino-acid chain; its full sequence is Large ribosomal subunit protein bL32 (49 aa).

It belongs to the bacterial ribosomal protein bL32 family.

The chain is Large ribosomal subunit protein bL32 from Nautilia profundicola (strain ATCC BAA-1463 / DSM 18972 / AmH).